We begin with the raw amino-acid sequence, 169 residues long: Ribosomal RNA large subunit methyltransferase H (169 aa).

S-adenosyl-L-methionine is bound by residues Leu-85, Gly-117, and 136–141 (LGELTW).

This sequence belongs to the RNA methyltransferase RlmH family. In terms of assembly, homodimer.

The protein localises to the cytoplasm. It carries out the reaction pseudouridine(1915) in 23S rRNA + S-adenosyl-L-methionine = N(3)-methylpseudouridine(1915) in 23S rRNA + S-adenosyl-L-homocysteine + H(+). Functionally, specifically methylates the pseudouridine at position 1915 (m3Psi1915) in 23S rRNA. This is Ribosomal RNA large subunit methyltransferase H from Brucella ovis (strain ATCC 25840 / 63/290 / NCTC 10512).